Reading from the N-terminus, the 155-residue chain is Transcriptional regulator MraZ (155 aa).

2 consecutive SpoVT-AbrB domains span residues 7 to 54 (TYEC…PMEE) and 83 to 126 (VKTV…DKDK).

This sequence belongs to the MraZ family. Forms oligomers.

It is found in the cytoplasm. Its subcellular location is the nucleoid. The polypeptide is Transcriptional regulator MraZ (Christiangramia forsetii (strain DSM 17595 / CGMCC 1.15422 / KT0803) (Gramella forsetii)).